Reading from the N-terminus, the 142-residue chain is Large ribosomal subunit protein uL16 (142 aa).

The protein belongs to the universal ribosomal protein uL16 family. In terms of assembly, part of the 50S ribosomal subunit.

Binds 23S rRNA and is also seen to make contacts with the A and possibly P site tRNAs. The sequence is that of Large ribosomal subunit protein uL16 from Mycoplasmopsis pulmonis (strain UAB CTIP) (Mycoplasma pulmonis).